Consider the following 315-residue polypeptide: tRNA-dihydrouridine(16) synthase (315 aa).

FMN-binding positions include 7–9 (PME) and glutamine 68. The active-site Proton donor is the cysteine 98. FMN contacts are provided by residues lysine 139, 199-201 (NGE), and 223-224 (GR).

The protein belongs to the Dus family. DusC subfamily. Requires FMN as cofactor.

It carries out the reaction 5,6-dihydrouridine(16) in tRNA + NADP(+) = uridine(16) in tRNA + NADPH + H(+). The enzyme catalyses 5,6-dihydrouridine(16) in tRNA + NAD(+) = uridine(16) in tRNA + NADH + H(+). Functionally, catalyzes the synthesis of 5,6-dihydrouridine (D), a modified base found in the D-loop of most tRNAs, via the reduction of the C5-C6 double bond in target uridines. Specifically modifies U16 in tRNAs. The polypeptide is tRNA-dihydrouridine(16) synthase (Aquipseudomonas alcaligenes (Pseudomonas alcaligenes)).